Reading from the N-terminus, the 194-residue chain is Endoribonuclease YbeY (194 aa).

Zn(2+)-binding residues include His-127, His-131, and Asp-137. Positions Pro-162–Ser-194 are disordered. A compositionally biased stretch (acidic residues) spans Asn-165–Ser-182.

It belongs to the endoribonuclease YbeY family. It depends on Zn(2+) as a cofactor.

Its subcellular location is the cytoplasm. Functionally, single strand-specific metallo-endoribonuclease involved in late-stage 70S ribosome quality control and in maturation of the 3' terminus of the 16S rRNA. This is Endoribonuclease YbeY from Rhodopirellula baltica (strain DSM 10527 / NCIMB 13988 / SH1).